A 440-amino-acid chain; its full sequence is Histidinol dehydrogenase (440 aa).

Tyrosine 133, glutamine 194, and asparagine 217 together coordinate NAD(+). Residues serine 240, glutamine 262, and histidine 265 each contribute to the substrate site. Zn(2+) contacts are provided by glutamine 262 and histidine 265. Residues glutamate 330 and histidine 331 each act as proton acceptor in the active site. Substrate is bound by residues histidine 331, aspartate 364, glutamate 418, and histidine 423. Residue aspartate 364 coordinates Zn(2+). A Zn(2+)-binding site is contributed by histidine 423.

The protein belongs to the histidinol dehydrogenase family. Requires Zn(2+) as cofactor.

It catalyses the reaction L-histidinol + 2 NAD(+) + H2O = L-histidine + 2 NADH + 3 H(+). Its pathway is amino-acid biosynthesis; L-histidine biosynthesis; L-histidine from 5-phospho-alpha-D-ribose 1-diphosphate: step 9/9. Functionally, catalyzes the sequential NAD-dependent oxidations of L-histidinol to L-histidinaldehyde and then to L-histidine. This chain is Histidinol dehydrogenase, found in Nitrosospira multiformis (strain ATCC 25196 / NCIMB 11849 / C 71).